Consider the following 270-residue polypeptide: Aliphatic sulfonates import ATP-binding protein SsuB 1 (270 aa).

The region spanning Val-18–Ile-232 is the ABC transporter domain. ATP is bound at residue Gly-50–Thr-57. Residues Pro-247–Arg-270 form a disordered region. Positions Pro-251 to Ser-261 are enriched in polar residues.

Belongs to the ABC transporter superfamily. Aliphatic sulfonates importer (TC 3.A.1.17.2) family. The complex is composed of two ATP-binding proteins (SsuB), two transmembrane proteins (SsuC) and a solute-binding protein (SsuA).

The protein localises to the cell inner membrane. It catalyses the reaction ATP + H2O + aliphatic sulfonate-[sulfonate-binding protein]Side 1 = ADP + phosphate + aliphatic sulfonateSide 2 + [sulfonate-binding protein]Side 1.. Functionally, part of the ABC transporter complex SsuABC involved in aliphatic sulfonates import. Responsible for energy coupling to the transport system. In Pseudomonas syringae pv. tomato (strain ATCC BAA-871 / DC3000), this protein is Aliphatic sulfonates import ATP-binding protein SsuB 1.